Here is a 107-residue protein sequence, read N- to C-terminus: MIFLKERTISVLGGYGTVTSATSRSIIHQLGIHLYGFLPYVDTPENLTTVNFFDILDGSGLQVILFSRKLVLYWSENFSWRTYIVLTLGGCVINFQTVSFEWNSTSR.

This is an uncharacterized protein from Microplitis demolitor (Parasitoid wasp).